A 508-amino-acid chain; its full sequence is MTLLQRLQAMSATTTRTILEGSISSFGGGTNEPLASKIPVLEESASHARYLKFIADGLIDEGLGSAVGSGSSIAVSVEDVVAGQAQDIQASEGSTDDADGSSHLALVFVKCFIIGFIILAAILGNMLVIVSVMRHRKLRIITNYFVVSLAVADMLVALCAMTFNASVMISGKWMFGSVMCDMWNSFDVYFSTASIMHLCCISVDRYYAIVQPLDYPLIMTQRRVFIMLLMVWLSPALLSFLPICSGWYTTTENYKYLKSNPHICEFKVNKAYAIVSSSMSFWIPGIVMLSMYYRIYQEADRQERLVYRSKVAALLLEKHLQISQIPKPRPSIQVEQSTISTMRRERKAARTLGIIMSAFLICWLPFFLWYIVSSLCDSCITPRLLVGILFWIGYFNSALNPIIYAYFNRDFRAAFKKTLKSLFPYAFYFCRRGRGRDDDRDLEFGGPSRRGTNGAQRTGSGSAEMANCVNSTASSEIHMSVMRARQYAVNVTPTTDAQMQQLHPLYTN.

At 1 to 111 (MTLLQRLQAM…SHLALVFVKC (111 aa)) the chain is on the extracellular side. The chain crosses the membrane as a helical span at residues 112–132 (FIIGFIILAAILGNMLVIVSV). The Cytoplasmic segment spans residues 133 to 139 (MRHRKLR). Residues 140–160 (IITNYFVVSLAVADMLVALCA) traverse the membrane as a helical segment. The Extracellular portion of the chain corresponds to 161 to 186 (MTFNASVMISGKWMFGSVMCDMWNSF). Residue asparagine 164 is glycosylated (N-linked (GlcNAc...) asparagine). Residues 187-209 (DVYFSTASIMHLCCISVDRYYAI) form a helical membrane-spanning segment. At 210 to 223 (VQPLDYPLIMTQRR) the chain is on the cytoplasmic side. Residues 224–244 (VFIMLLMVWLSPALLSFLPIC) form a helical membrane-spanning segment. The Extracellular segment spans residues 245-270 (SGWYTTTENYKYLKSNPHICEFKVNK). The chain crosses the membrane as a helical span at residues 271 to 291 (AYAIVSSSMSFWIPGIVMLSM). Residues 292 to 351 (YYRIYQEADRQERLVYRSKVAALLLEKHLQISQIPKPRPSIQVEQSTISTMRRERKAART) lie on the Cytoplasmic side of the membrane. A helical transmembrane segment spans residues 352-372 (LGIIMSAFLICWLPFFLWYIV). The Extracellular portion of the chain corresponds to 373-383 (SSLCDSCITPR). A helical transmembrane segment spans residues 384–404 (LLVGILFWIGYFNSALNPIIY). At 405–508 (AYFNRDFRAA…MQQLHPLYTN (104 aa)) the chain is on the cytoplasmic side. The disordered stretch occupies residues 440–464 (RDLEFGGPSRRGTNGAQRTGSGSAE). The segment covering 450–461 (RGTNGAQRTGSG) has biased composition (polar residues).

This sequence belongs to the G-protein coupled receptor 1 family. In terms of tissue distribution, in the adult, expressed in the superior protocerebrum and the optic lobe medulla of the central nervous system, nurse cells of egg chambers in the ovary at oogenic stages 1-10, and spermatogonia and spermatocytes in the testis. Expressed in embryonic and larval ventral nerve cord and brain lobe, and the larval imaginal disk and larval salivary gland. Also expressed in larval synaptic boutons and retinal cells in the optic disk.

It is found in the cell membrane. In terms of biological role, autoreceptor for octopamine, which is a neurotransmitter, neurohormone, and neuromodulator in invertebrates. Negatively regulates synaptic growth by activating the inhibitory G protein Galphao and limiting cAMP production. Antagonizes the action of Octbeta2R which stimulates synaptic growth. The sequence is that of Octopamine receptor beta-1R from Drosophila melanogaster (Fruit fly).